Here is a 406-residue protein sequence, read N- to C-terminus: Immediate early response gene 5-like protein (406 aa).

Disordered regions lie at residues 166–195 (QPPH…APAA) and 216–235 (AAPS…PSSS). Positions 182-193 (QPGPAPLPPPAP) are enriched in pro residues.

The protein belongs to the IER family.

This Mus musculus (Mouse) protein is Immediate early response gene 5-like protein (Ier5l).